Here is a 130-residue protein sequence, read N- to C-terminus: Glycine cleavage system H protein (130 aa).

Residues 24 to 106 (TFTVGITDHA…YGDGWLYRIT (83 aa)) enclose the Lipoyl-binding domain. Residue Lys-65 is modified to N6-lipoyllysine.

It belongs to the GcvH family. The glycine cleavage system is composed of four proteins: P, T, L and H. The cofactor is (R)-lipoate.

The glycine cleavage system catalyzes the degradation of glycine. The H protein shuttles the methylamine group of glycine from the P protein to the T protein. This is Glycine cleavage system H protein from Coxiella burnetii (strain CbuK_Q154) (Coxiella burnetii (strain Q154)).